A 284-amino-acid chain; its full sequence is Nucleotide-binding protein NMC0691 (284 aa).

Position 8 to 15 (8 to 15) interacts with ATP; it reads GLSGSGKS. Residue 58-61 participates in GTP binding; that stretch reads DVRS.

Belongs to the RapZ-like family.

Its function is as follows. Displays ATPase and GTPase activities. The sequence is that of Nucleotide-binding protein NMC0691 from Neisseria meningitidis serogroup C / serotype 2a (strain ATCC 700532 / DSM 15464 / FAM18).